A 316-amino-acid polypeptide reads, in one-letter code: Acetyl-coenzyme A carboxylase carboxyl transferase subunit alpha (316 aa).

One can recognise a CoA carboxyltransferase C-terminal domain in the interval Arg-39–Met-293.

This sequence belongs to the AccA family. As to quaternary structure, acetyl-CoA carboxylase is a heterohexamer composed of biotin carboxyl carrier protein (AccB), biotin carboxylase (AccC) and two subunits each of ACCase subunit alpha (AccA) and ACCase subunit beta (AccD).

It is found in the cytoplasm. It carries out the reaction N(6)-carboxybiotinyl-L-lysyl-[protein] + acetyl-CoA = N(6)-biotinyl-L-lysyl-[protein] + malonyl-CoA. It participates in lipid metabolism; malonyl-CoA biosynthesis; malonyl-CoA from acetyl-CoA: step 1/1. Component of the acetyl coenzyme A carboxylase (ACC) complex. First, biotin carboxylase catalyzes the carboxylation of biotin on its carrier protein (BCCP) and then the CO(2) group is transferred by the carboxyltransferase to acetyl-CoA to form malonyl-CoA. This Pseudomonas aeruginosa (strain LESB58) protein is Acetyl-coenzyme A carboxylase carboxyl transferase subunit alpha.